The chain runs to 201 residues: tRNA (guanine-N(7)-)-methyltransferase (201 aa).

Positions 33, 58, 85, and 108 each coordinate S-adenosyl-L-methionine. The active site involves aspartate 108. The substrate site is built by lysine 112 and aspartate 144.

The protein belongs to the class I-like SAM-binding methyltransferase superfamily. TrmB family.

The enzyme catalyses guanosine(46) in tRNA + S-adenosyl-L-methionine = N(7)-methylguanosine(46) in tRNA + S-adenosyl-L-homocysteine. It participates in tRNA modification; N(7)-methylguanine-tRNA biosynthesis. Functionally, catalyzes the formation of N(7)-methylguanine at position 46 (m7G46) in tRNA. The protein is tRNA (guanine-N(7)-)-methyltransferase of Anaeromyxobacter dehalogenans (strain 2CP-C).